The primary structure comprises 151 residues: Ribosome maturation factor RimP (151 aa).

It belongs to the RimP family.

It localises to the cytoplasm. Functionally, required for maturation of 30S ribosomal subunits. The polypeptide is Ribosome maturation factor RimP (Caldicellulosiruptor bescii (strain ATCC BAA-1888 / DSM 6725 / KCTC 15123 / Z-1320) (Anaerocellum thermophilum)).